Here is a 527-residue protein sequence, read N- to C-terminus: Abrin-b (527 aa).

Gln-1 carries the pyrrolidone carboxylic acid modification. Residue Asn-110 is glycosylated (N-linked (GlcNAc...) asparagine). The active site involves Glu-163. 3 disulfide bridges follow: Cys-246-Cys-268, Cys-285-Cys-304, and Cys-328-Cys-345. The Ricin B-type lectin 1 domain maps to 272 to 399; it reads YEPTVRIGGR…YLMRQGWRTG (128 aa). One copy of the 1-alpha repeat lies at 282-324; the sequence is NGMCVDVYDDGYHNGNRIIAWKCKDRLEENQLWTLKSDKTIRS. Residues 325 to 365 form a 1-beta repeat; that stretch reads NGKCLTTEGYAPGNYVMIYDCTSAVAEATYWEIWDNGTIIN. N-linked (GlcNAc...) asparagine glycosylation is found at Asn-360 and Asn-400. Residues 368-400 form a 1-gamma repeat; that stretch reads SALVLSAESSSMGGTLTVQTNEYLMRQGWRTGN. One can recognise a Ricin B-type lectin 2 domain in the interval 402 to 526; it reads TSPFVTSISG…GKPNQIWLTL (125 aa). The stretch at 413 to 448 is one 2-alpha repeat; the sequence is SDLCMQAQGSNVWLAYCDNNKKEQQWALYTDGSIRS. Disulfide bonds link Cys-416–Cys-429 and Cys-455–Cys-472. The 2-beta repeat unit spans residues 452 to 491; that stretch reads TNNCLTSKDHKQGSPIVLMACSNGWASQRWLFRNDGSIYN. Residues 494 to 527 form a 2-gamma repeat; sequence DDMVMDVKRSDPSLKEIILHPYHGKPNQIWLTLF.

This sequence in the N-terminal section; belongs to the ribosome-inactivating protein family. Type 2 RIP subfamily. As to quaternary structure, disulfide-linked dimer of A and B chains.

The catalysed reaction is Endohydrolysis of the N-glycosidic bond at one specific adenosine on the 28S rRNA.. The A chain is responsible for inhibiting protein synthesis through the catalytic inactivation of 60S ribosomal subunits by removing adenine from position 4,324 of 28S rRNA. Abrin-a is more toxic than ricin. Its function is as follows. The B chain is a galactose-specific lectin that facilitates the binding of abrin to the cell membrane that precedes endocytosis. The chain is Abrin-b from Abrus precatorius (Indian licorice).